The following is a 644-amino-acid chain: DNA gyrase subunit B (644 aa).

Residues C429–P543 form the Toprim domain. Residues E435, D508, and D510 each coordinate Mg(2+).

It belongs to the type II topoisomerase GyrB family. Heterotetramer, composed of two GyrA and two GyrB chains. In the heterotetramer, GyrA contains the active site tyrosine that forms a transient covalent intermediate with DNA, while GyrB binds cofactors and catalyzes ATP hydrolysis. Requires Mg(2+) as cofactor. Mn(2+) serves as cofactor. Ca(2+) is required as a cofactor.

It is found in the cytoplasm. It catalyses the reaction ATP-dependent breakage, passage and rejoining of double-stranded DNA.. In terms of biological role, a type II topoisomerase that negatively supercoils closed circular double-stranded (ds) DNA in an ATP-dependent manner to modulate DNA topology and maintain chromosomes in an underwound state. Negative supercoiling favors strand separation, and DNA replication, transcription, recombination and repair, all of which involve strand separation. Also able to catalyze the interconversion of other topological isomers of dsDNA rings, including catenanes and knotted rings. Type II topoisomerases break and join 2 DNA strands simultaneously in an ATP-dependent manner. The polypeptide is DNA gyrase subunit B (Staphylococcus aureus (strain USA300)).